Consider the following 938-residue polypeptide: MIDYKNTLNLPETGFPMRGDLAKREPDMLKNWYDKNLYQKVRESSKGKKSFILHDGPPYANGNIHIGHAVNKILKDIIMKSKTALGFDTPYVPGWDCHGLPIELKVEGIVGKPNEKISAAEFRQACRDYAKEQVEGQKADFIRMGILGDWDNPYLTMNFDTEAHIIRTLGKVIANGHLYKGSKPVHWCLDCGSSLAEAEVEYEDKVSPSIYVRFKAVDSVAVEAKFNAVGKGSGQISAVIWTTTPWTLPSNKAISINPEFDYQLVQFGGERVVLVKDLVESVQKAVGIESVEVLGEVKGDALELMQFQHPFYDYSVPLILGDHVTTDGGTGLVHTAPDHGQDDFVVSKKYNIEMAGLVANDGKFISSTPFFAGLGVFESNEKVLEKLKEVGALLKLERIKHSYPHCWRHKTPIIFRATPQWFIGMETQGLREQALGEIKSVRWIPSWGEARIDTMVANRPDWCISRQRTWGVPMTMFVHNETEELHPRTLEILESVAKRVEEKGIQAWWDLDPVEVLGEEDAKNYRKVPDTLDVWFDSGSTYASVVEARPEFNGNSTDMYLEGSDQHRGWFMSSLMLSTATNGKAPYKQVLTHGFVVDEKGRKMSKSLGNVIVPSEVWNKNGADILRLWVASTDYTGEIAVSHNILNSAGESYRRIRNTARFLLANLNGFDPKRDLVKPEEMIALDRWAVSCALEAQNDIKEAYDNYQFHTVVQRLMRFCSIEMGSFYLDIIKDRQYTTKADSLARRSCQTALWHIAEALVRWMAPILSFTADEIWSYLPQVEGRSEFVFTEEFYEGLFGLTEADKLDDAYWQQILKVRAESNRVLEQARKDKVIGSGLEAKVTLYANNEIRAMLEQLGNELRFVLITSQAIIKPLSEADVAEGEMAGLAVKVERAEGEKCPRCWHFATDIGTHTEHSSVCGRCVENVAGEGEKRSFA.

A 'HIGH' region motif is present at residues 58-68 (PYANGNIHIGH). Position 562 (Glu-562) interacts with L-isoleucyl-5'-AMP. Positions 603–607 (KMSKS) match the 'KMSKS' region motif. An ATP-binding site is contributed by Lys-606. Cys-901, Cys-904, Cys-921, and Cys-924 together coordinate Zn(2+).

The protein belongs to the class-I aminoacyl-tRNA synthetase family. IleS type 1 subfamily. In terms of assembly, monomer. The cofactor is Zn(2+).

It localises to the cytoplasm. The catalysed reaction is tRNA(Ile) + L-isoleucine + ATP = L-isoleucyl-tRNA(Ile) + AMP + diphosphate. Its function is as follows. Catalyzes the attachment of isoleucine to tRNA(Ile). As IleRS can inadvertently accommodate and process structurally similar amino acids such as valine, to avoid such errors it has two additional distinct tRNA(Ile)-dependent editing activities. One activity is designated as 'pretransfer' editing and involves the hydrolysis of activated Val-AMP. The other activity is designated 'posttransfer' editing and involves deacylation of mischarged Val-tRNA(Ile). The sequence is that of Isoleucine--tRNA ligase from Actinobacillus pleuropneumoniae serotype 7 (strain AP76).